The sequence spans 74 residues: Anaphase-promoting complex subunit 13 (74 aa).

Positions 33–53 (LNELPDPEQDNGGTTESVKEQ) are disordered.

This sequence belongs to the APC13 family. The mammalian APC/C is composed at least of 14 distinct subunits ANAPC1, ANAPC2, CDC27/APC3, ANAPC4, ANAPC5, CDC16/APC6, ANAPC7, CDC23/APC8, ANAPC10, ANAPC11, CDC26/APC12, ANAPC13, ANAPC15 and ANAPC16 that assemble into a complex of at least 19 chains with a combined molecular mass of around 1.2 MDa; APC/C interacts with FZR1 and FBXO5.

The protein localises to the nucleus. Its pathway is protein modification; protein ubiquitination. Component of the anaphase promoting complex/cyclosome (APC/C), a cell cycle-regulated E3 ubiquitin ligase that controls progression through mitosis and the G1 phase of the cell cycle. The APC/C complex acts by mediating ubiquitination and subsequent degradation of target proteins: it mainly mediates the formation of 'Lys-11'-linked polyubiquitin chains and, to a lower extent, the formation of 'Lys-48'- and 'Lys-63'-linked polyubiquitin chains. The APC/C complex catalyzes assembly of branched 'Lys-11'-/'Lys-48'-linked branched ubiquitin chains on target proteins. This chain is Anaphase-promoting complex subunit 13 (ANAPC13), found in Pongo abelii (Sumatran orangutan).